Consider the following 301-residue polypeptide: N-acetylmuramic acid 6-phosphate etherase (301 aa).

The 161-residue stretch at isoleucine 55 to lysine 215 folds into the SIS domain. Catalysis depends on glutamate 83, which acts as the Proton donor. Glutamate 111 is a catalytic residue.

The protein belongs to the GCKR-like family. MurNAc-6-P etherase subfamily. As to quaternary structure, homodimer.

It catalyses the reaction N-acetyl-D-muramate 6-phosphate + H2O = N-acetyl-D-glucosamine 6-phosphate + (R)-lactate. It functions in the pathway amino-sugar metabolism; 1,6-anhydro-N-acetylmuramate degradation. Its pathway is amino-sugar metabolism; N-acetylmuramate degradation. The protein operates within cell wall biogenesis; peptidoglycan recycling. In terms of biological role, specifically catalyzes the cleavage of the D-lactyl ether substituent of MurNAc 6-phosphate, producing GlcNAc 6-phosphate and D-lactate. Together with AnmK, is also required for the utilization of anhydro-N-acetylmuramic acid (anhMurNAc) either imported from the medium or derived from its own cell wall murein, and thus plays a role in cell wall recycling. The sequence is that of N-acetylmuramic acid 6-phosphate etherase from Burkholderia lata (strain ATCC 17760 / DSM 23089 / LMG 22485 / NCIMB 9086 / R18194 / 383).